Reading from the N-terminus, the 66-residue chain is Cold shock protein CspB (66 aa).

One can recognise a CSD domain in the interval 4–63; sequence GKVKWFNNEKGYGFIEVEGGSDVFVHFTAIQGEGFKSLEEGQEVSFEIVQGNRGPQAANV.

As to quaternary structure, homodimer.

The protein localises to the cytoplasm. Its function is as follows. Affects cell viability at low temperatures. This Geobacillus stearothermophilus (Bacillus stearothermophilus) protein is Cold shock protein CspB (cspB).